A 474-amino-acid chain; its full sequence is Glutathione synthetase (474 aa).

R125 is a binding site for substrate. E144 contacts ATP. Residues E144 and N146 each coordinate Mg(2+). Substrate contacts are provided by residues 148–151 (IAAS), 214–216 (QRN), Q220, and 267–270 (RTGY). Residues K305, 364 to 373 (KPQREGGGNN), Y375, 398 to 401 (MDKI), and E425 contribute to the ATP site. Residue E368 participates in Mg(2+) binding. Residue R450 participates in substrate binding. ATP is bound by residues K452 and D458. A substrate-binding site is contributed by 461–462 (VA).

It belongs to the eukaryotic GSH synthase family. Homodimer. Mg(2+) serves as cofactor. In terms of tissue distribution, expressed ubiquitously.

It catalyses the reaction gamma-L-glutamyl-L-cysteine + glycine + ATP = glutathione + ADP + phosphate + H(+). The catalysed reaction is gamma-L-glutamyl-(2S)-2-aminobutanoate + glycine + ATP = ophthalmate + ADP + phosphate + H(+). The protein operates within sulfur metabolism; glutathione biosynthesis; glutathione from L-cysteine and L-glutamate: step 2/2. Catalyzes the production of glutathione from gamma-glutamylcysteine and glycine in an ATP-dependent manner. Glutathione (gamma-glutamylcysteinylglycine, GSH) is the most abundant intracellular thiol in living aerobic cells and is required for numerous processes including the protection of cells against oxidative damage, amino acid transport, the detoxification of foreign compounds, the maintenance of protein sulfhydryl groups in a reduced state and acts as a cofactor for a number of enzymes. Participates in ophthalmate biosynthesis in hepatocytes. This chain is Glutathione synthetase, found in Xenopus laevis (African clawed frog).